Here is a 430-residue protein sequence, read N- to C-terminus: Ribosomal protein uS12 methylthiotransferase RimO (430 aa).

An MTTase N-terminal domain is found at 1-116 (MRVGIKVLGC…IANALEKGTD (116 aa)). [4Fe-4S] cluster is bound by residues Cys10, Cys46, Cys79, Cys148, Cys152, and Cys155. The Radical SAM core domain occupies 134-365 (LEERPYAYVK…LLQAEISNSR (232 aa)). Positions 367 to 430 (DRFIGRKLKF…DEYDMWGSVT (64 aa)) constitute a TRAM domain.

Belongs to the methylthiotransferase family. RimO subfamily. Requires [4Fe-4S] cluster as cofactor.

It localises to the cytoplasm. It catalyses the reaction L-aspartate(89)-[ribosomal protein uS12]-hydrogen + (sulfur carrier)-SH + AH2 + 2 S-adenosyl-L-methionine = 3-methylsulfanyl-L-aspartate(89)-[ribosomal protein uS12]-hydrogen + (sulfur carrier)-H + 5'-deoxyadenosine + L-methionine + A + S-adenosyl-L-homocysteine + 2 H(+). Catalyzes the methylthiolation of an aspartic acid residue of ribosomal protein uS12. The protein is Ribosomal protein uS12 methylthiotransferase RimO of Thermotoga sp. (strain RQ2).